A 78-amino-acid polypeptide reads, in one-letter code: Large ribosomal subunit protein bL28 (78 aa).

Residues Met1–His20 are disordered.

This sequence belongs to the bacterial ribosomal protein bL28 family.

This Actinobacillus succinogenes (strain ATCC 55618 / DSM 22257 / CCUG 43843 / 130Z) protein is Large ribosomal subunit protein bL28.